Here is a 503-residue protein sequence, read N- to C-terminus: Maturase K (503 aa).

This sequence belongs to the intron maturase 2 family. MatK subfamily.

The protein localises to the plastid. It localises to the chloroplast. Its function is as follows. Usually encoded in the trnK tRNA gene intron. Probably assists in splicing its own and other chloroplast group II introns. In Syzygium australe (Brush cherry), this protein is Maturase K.